Reading from the N-terminus, the 226-residue chain is NEDD8-specific protease 1 (226 aa).

Belongs to the peptidase C48 family.

Its function is as follows. Processes the pre-form of the ubiquitin-like protein NEDD8/RUB1. Has the capacity to discriminate between NEDD8/RUB1 and ubiquitin. Has no SUMO protease activity. The chain is NEDD8-specific protease 1 (NEDP1) from Arabidopsis thaliana (Mouse-ear cress).